We begin with the raw amino-acid sequence, 328 residues long: Formimidoylglutamase (328 aa).

His-133, Asp-159, His-161, Asp-163, Asp-253, and Asp-255 together coordinate Mn(2+).

This sequence belongs to the arginase family. It depends on Mn(2+) as a cofactor.

The catalysed reaction is N-formimidoyl-L-glutamate + H2O = formamide + L-glutamate. It functions in the pathway amino-acid degradation; L-histidine degradation into L-glutamate; L-glutamate from N-formimidoyl-L-glutamate (hydrolase route): step 1/1. Its function is as follows. Catalyzes the conversion of N-formimidoyl-L-glutamate to L-glutamate and formamide. In Streptococcus pyogenes serotype M6 (strain ATCC BAA-946 / MGAS10394), this protein is Formimidoylglutamase.